A 95-amino-acid polypeptide reads, in one-letter code: Aspartyl/glutamyl-tRNA(Asn/Gln) amidotransferase subunit C (95 aa).

This sequence belongs to the GatC family. Heterotrimer of A, B and C subunits.

The catalysed reaction is L-glutamyl-tRNA(Gln) + L-glutamine + ATP + H2O = L-glutaminyl-tRNA(Gln) + L-glutamate + ADP + phosphate + H(+). It catalyses the reaction L-aspartyl-tRNA(Asn) + L-glutamine + ATP + H2O = L-asparaginyl-tRNA(Asn) + L-glutamate + ADP + phosphate + 2 H(+). Functionally, allows the formation of correctly charged Asn-tRNA(Asn) or Gln-tRNA(Gln) through the transamidation of misacylated Asp-tRNA(Asn) or Glu-tRNA(Gln) in organisms which lack either or both of asparaginyl-tRNA or glutaminyl-tRNA synthetases. The reaction takes place in the presence of glutamine and ATP through an activated phospho-Asp-tRNA(Asn) or phospho-Glu-tRNA(Gln). This is Aspartyl/glutamyl-tRNA(Asn/Gln) amidotransferase subunit C from Bradyrhizobium sp. (strain BTAi1 / ATCC BAA-1182).